The sequence spans 300 residues: 4-hydroxy-tetrahydrodipicolinate synthase (300 aa).

Thr-53 contributes to the pyruvate binding site. Residue Tyr-141 is the Proton donor/acceptor of the active site. Lys-169 serves as the catalytic Schiff-base intermediate with substrate. Residue Thr-211 coordinates pyruvate.

The protein belongs to the DapA family. Homotetramer; dimer of dimers.

The protein resides in the cytoplasm. It catalyses the reaction L-aspartate 4-semialdehyde + pyruvate = (2S,4S)-4-hydroxy-2,3,4,5-tetrahydrodipicolinate + H2O + H(+). It functions in the pathway amino-acid biosynthesis; L-lysine biosynthesis via DAP pathway; (S)-tetrahydrodipicolinate from L-aspartate: step 3/4. In terms of biological role, catalyzes the condensation of (S)-aspartate-beta-semialdehyde [(S)-ASA] and pyruvate to 4-hydroxy-tetrahydrodipicolinate (HTPA). The sequence is that of 4-hydroxy-tetrahydrodipicolinate synthase from Rickettsia massiliae (strain Mtu5).